We begin with the raw amino-acid sequence, 3587 residues long: Surfactin synthase subunit 1 (3587 aa).

3 consecutive Carrier domains span residues 971-1046 (APRN…DHRE), 2010-2085 (APRN…ASAE), and 3038-3112 (APTT…ERAE). O-(pantetheine 4'-phosphoryl)serine is present on residues Ser1006, Ser2045, and Ser3073.

The protein belongs to the ATP-dependent AMP-binding enzyme family. Requires pantetheine 4'-phosphate as cofactor.

It functions in the pathway antibiotic biosynthesis; surfactin biosynthesis. In terms of biological role, this protein is a multifunctional enzyme able to activate and polymerize the amino acids Leu, Glu, Asp and Val. Activation sites for these AA consist of individual domains. This is Surfactin synthase subunit 1 (srfAA) from Bacillus subtilis (strain 168).